The primary structure comprises 182 residues: ATP-dependent protease subunit HslV (182 aa).

The active site involves Thr12. Na(+) contacts are provided by Ala167, Cys170, and Thr173.

It belongs to the peptidase T1B family. HslV subfamily. In terms of assembly, a double ring-shaped homohexamer of HslV is capped on each side by a ring-shaped HslU homohexamer. The assembly of the HslU/HslV complex is dependent on binding of ATP.

The protein localises to the cytoplasm. It carries out the reaction ATP-dependent cleavage of peptide bonds with broad specificity.. With respect to regulation, allosterically activated by HslU binding. Its function is as follows. Protease subunit of a proteasome-like degradation complex believed to be a general protein degrading machinery. This chain is ATP-dependent protease subunit HslV, found in Paramagnetospirillum magneticum (strain ATCC 700264 / AMB-1) (Magnetospirillum magneticum).